The chain runs to 237 residues: Orotidine 5'-phosphate decarboxylase (237 aa).

Residues Asp10, Lys33, 60–69, Thr123, Arg185, Gln194, Gly214, and Arg215 each bind substrate; that span reads DLKLHDIPNT. Residue Lys62 is the Proton donor of the active site.

The protein belongs to the OMP decarboxylase family. Type 1 subfamily. As to quaternary structure, homodimer.

It carries out the reaction orotidine 5'-phosphate + H(+) = UMP + CO2. Its pathway is pyrimidine metabolism; UMP biosynthesis via de novo pathway; UMP from orotate: step 2/2. In terms of biological role, catalyzes the decarboxylation of orotidine 5'-monophosphate (OMP) to uridine 5'-monophosphate (UMP). This is Orotidine 5'-phosphate decarboxylase from Enterococcus faecalis (strain ATCC 700802 / V583).